We begin with the raw amino-acid sequence, 152 residues long: Aspartate carbamoyltransferase regulatory chain (152 aa).

Positions 108, 113, 137, and 140 each coordinate Zn(2+).

The protein belongs to the PyrI family. In terms of assembly, contains catalytic and regulatory chains. Zn(2+) is required as a cofactor.

Its function is as follows. Involved in allosteric regulation of aspartate carbamoyltransferase. The polypeptide is Aspartate carbamoyltransferase regulatory chain (Neisseria meningitidis serogroup A / serotype 4A (strain DSM 15465 / Z2491)).